A 291-amino-acid polypeptide reads, in one-letter code: Protein/nucleic acid deglycase HchA (291 aa).

A compositionally biased stretch (basic and acidic residues) spans Met1–His18. Positions Met1 to Ala20 are disordered. Cys188 functions as the Nucleophile in the catalytic mechanism.

This sequence belongs to the peptidase C56 family. HchA subfamily.

The protein resides in the cytoplasm. It carries out the reaction N(omega)-(1-hydroxy-2-oxopropyl)-L-arginyl-[protein] + H2O = lactate + L-arginyl-[protein] + H(+). It catalyses the reaction N(6)-(1-hydroxy-2-oxopropyl)-L-lysyl-[protein] + H2O = lactate + L-lysyl-[protein] + H(+). The enzyme catalyses S-(1-hydroxy-2-oxopropyl)-L-cysteinyl-[protein] + H2O = lactate + L-cysteinyl-[protein] + H(+). The catalysed reaction is N(omega)-(1-hydroxy-2-oxoethyl)-L-arginyl-[protein] + H2O = L-arginyl-[protein] + glycolate + H(+). It carries out the reaction N(6)-(1-hydroxy-2-oxoethyl)-L-lysyl-[protein] + H2O = glycolate + L-lysyl-[protein] + H(+). It catalyses the reaction S-(1-hydroxy-2-oxoethyl)-L-cysteinyl-[protein] + H2O = glycolate + L-cysteinyl-[protein] + H(+). The enzyme catalyses N(2)-(1-hydroxy-2-oxopropyl)-dGTP + H2O = lactate + dGTP + H(+). The catalysed reaction is N(2)-(1-hydroxy-2-oxopropyl)-GTP + H2O = lactate + GTP + H(+). It carries out the reaction N(2)-(1-hydroxy-2-oxopropyl)-GDP + H2O = lactate + GDP + H(+). It catalyses the reaction N(2)-(1-hydroxy-2-oxopropyl)-GMP + H2O = lactate + GMP + H(+). The enzyme catalyses N(2)-(1-hydroxy-2-oxoethyl)-dGTP + H2O = dGTP + glycolate + H(+). The catalysed reaction is N(2)-(1-hydroxy-2-oxoethyl)-GTP + H2O = glycolate + GTP + H(+). It carries out the reaction N(2)-(1-hydroxy-2-oxoethyl)-GDP + H2O = glycolate + GDP + H(+). It catalyses the reaction N(2)-(1-hydroxy-2-oxoethyl)-GMP + H2O = glycolate + GMP + H(+). The enzyme catalyses an N(2)-(1-hydroxy-2-oxopropyl)-guanosine in RNA + H2O = a guanosine in RNA + lactate + H(+). The catalysed reaction is an N(2)-(1-hydroxy-2-oxopropyl)-2'-deoxyguanosine in DNA + H2O = a 2'-deoxyguanosine in DNA + lactate + H(+). It carries out the reaction an N(2)-(1-hydroxy-2-oxoethyl)-guanosine in RNA + H2O = a guanosine in RNA + glycolate + H(+). It catalyses the reaction an N(2)-(1-hydroxy-2-oxoethyl)-2'-deoxyguanosine in DNA + H2O = a 2'-deoxyguanosine in DNA + glycolate + H(+). Protein and nucleotide deglycase that catalyzes the deglycation of the Maillard adducts formed between amino groups of proteins or nucleotides and reactive carbonyl groups of glyoxals. Thus, functions as a protein deglycase that repairs methylglyoxal- and glyoxal-glycated proteins, and releases repaired proteins and lactate or glycolate, respectively. Deglycates cysteine, arginine and lysine residues in proteins, and thus reactivates these proteins by reversing glycation by glyoxals. Acts on early glycation intermediates (hemithioacetals and aminocarbinols), preventing the formation of Schiff bases and advanced glycation endproducts (AGE). Also functions as a nucleotide deglycase able to repair glycated guanine in the free nucleotide pool (GTP, GDP, GMP, dGTP) and in DNA and RNA. Is thus involved in a major nucleotide repair system named guanine glycation repair (GG repair), dedicated to reversing methylglyoxal and glyoxal damage via nucleotide sanitization and direct nucleic acid repair. Plays an important role in protecting cells from carbonyl stress. The polypeptide is Protein/nucleic acid deglycase HchA (Pseudomonas aeruginosa (strain LESB58)).